Reading from the N-terminus, the 729-residue chain is Sorting nexin mvp1 (729 aa).

Disordered stretches follow at residues 1 to 43 and 177 to 340; these read MSLF…SANL and PLPK…EEPN. One can recognise a PX domain in the interval 356-464; it reads EETVTVNLLP…VMFLTVPTEL (109 aa). Residues arginine 392, serine 394, lysine 418, and arginine 431 each contribute to the a 1,2-diacyl-sn-glycero-3-phospho-(1D-myo-inositol-3-phosphate) site.

Belongs to the sorting nexin family.

The protein localises to the cytoplasm. It localises to the membrane. Functionally, required for vacuolar protein sorting. The sequence is that of Sorting nexin mvp1 (mvp1) from Aspergillus fumigatus (strain ATCC MYA-4609 / CBS 101355 / FGSC A1100 / Af293) (Neosartorya fumigata).